We begin with the raw amino-acid sequence, 650 residues long: Serine/threonine-protein phosphatase with EF-hands 1 (650 aa).

The region spanning 16–45 (VIKAALVIQNWYRRYRARLRVRQHYALAIF) is the IQ domain. The catalytic stretch occupies residues 124-456 (IHILLQAFKQ…PQFFQYQVTS (333 aa)). The Mn(2+) site is built by Asp175, His177, Asp204, and Asn236. His237 (proton donor) is an active-site residue. His288 is a binding site for Mn(2+). Residues 315–348 (PVLGNQETGEKRNKSASNYVEPRKVEPDKTPSED) form a disordered region. Positions 335 to 348 (EPRKVEPDKTPSED) are enriched in basic and acidic residues. Position 404 (His404) interacts with Mn(2+). EF-hand domains lie at 484 to 519 (SRKT…ILGL), 567 to 602 (RYRS…FNAH), and 607 to 642 (IDDS…VHKY). The Ca(2+) site is built by Asp497, Ser499, Ser501, Arg503, Glu508, Asp580, Asp582, Ser584, Glu591, Asp620, Asn622, Asp624, Asn626, and Glu631.

Belongs to the PPP phosphatase family. The cofactor is Mn(2+). Requires Mg(2+) as cofactor. In terms of tissue distribution, in the embryo it is almost exclusively expressed in the peripheral nervous system, within sensory neurons of cranial and dorsal root ganglia. Otherwise found in fetal inner ear and a small group of neurons in the midbrain/pons junction.

The catalysed reaction is O-phospho-L-seryl-[protein] + H2O = L-seryl-[protein] + phosphate. It catalyses the reaction O-phospho-L-threonyl-[protein] + H2O = L-threonyl-[protein] + phosphate. Activated by calcium. Its function is as follows. May have a role in the recovery or adaptation response of photoreceptors. May have a role in diverse sensory neurons and in development. The sequence is that of Serine/threonine-protein phosphatase with EF-hands 1 (Ppef1) from Mus musculus (Mouse).